The chain runs to 580 residues: 2-succinyl-5-enolpyruvyl-6-hydroxy-3-cyclohexene-1-carboxylate synthase (580 aa).

Belongs to the TPP enzyme family. MenD subfamily. In terms of assembly, homodimer. Mg(2+) serves as cofactor. It depends on Mn(2+) as a cofactor. The cofactor is thiamine diphosphate.

The enzyme catalyses isochorismate + 2-oxoglutarate + H(+) = 5-enolpyruvoyl-6-hydroxy-2-succinyl-cyclohex-3-ene-1-carboxylate + CO2. Its pathway is quinol/quinone metabolism; 1,4-dihydroxy-2-naphthoate biosynthesis; 1,4-dihydroxy-2-naphthoate from chorismate: step 2/7. It functions in the pathway quinol/quinone metabolism; menaquinone biosynthesis. Its function is as follows. Catalyzes the thiamine diphosphate-dependent decarboxylation of 2-oxoglutarate and the subsequent addition of the resulting succinic semialdehyde-thiamine pyrophosphate anion to isochorismate to yield 2-succinyl-5-enolpyruvyl-6-hydroxy-3-cyclohexene-1-carboxylate (SEPHCHC). The sequence is that of 2-succinyl-5-enolpyruvyl-6-hydroxy-3-cyclohexene-1-carboxylate synthase from Bacillus pumilus (strain SAFR-032).